The primary structure comprises 246 residues: tRNA pseudouridine synthase A (246 aa).

Aspartate 52 (nucleophile) is an active-site residue. Tyrosine 111 contributes to the substrate binding site.

This sequence belongs to the tRNA pseudouridine synthase TruA family. As to quaternary structure, homodimer.

The catalysed reaction is uridine(38/39/40) in tRNA = pseudouridine(38/39/40) in tRNA. Formation of pseudouridine at positions 38, 39 and 40 in the anticodon stem and loop of transfer RNAs. The protein is tRNA pseudouridine synthase A of Borreliella burgdorferi (strain ATCC 35210 / DSM 4680 / CIP 102532 / B31) (Borrelia burgdorferi).